The chain runs to 282 residues: Biotin synthase (282 aa).

The Radical SAM core domain maps to 1-228; the sequence is MQEIFLCSIS…NARLMVAGGR (228 aa). [4Fe-4S] cluster-binding residues include Cys-17, Cys-21, and Cys-24. Residues Cys-61, Cys-96, Cys-154, and Arg-221 each coordinate [2Fe-2S] cluster.

Belongs to the radical SAM superfamily. Biotin synthase family. Homodimer. [4Fe-4S] cluster serves as cofactor. The cofactor is [2Fe-2S] cluster.

The catalysed reaction is (4R,5S)-dethiobiotin + (sulfur carrier)-SH + 2 reduced [2Fe-2S]-[ferredoxin] + 2 S-adenosyl-L-methionine = (sulfur carrier)-H + biotin + 2 5'-deoxyadenosine + 2 L-methionine + 2 oxidized [2Fe-2S]-[ferredoxin]. The protein operates within cofactor biosynthesis; biotin biosynthesis; biotin from 7,8-diaminononanoate: step 2/2. Catalyzes the conversion of dethiobiotin (DTB) to biotin by the insertion of a sulfur atom into dethiobiotin via a radical-based mechanism. This is Biotin synthase from Helicobacter pylori (strain Shi470).